Here is a 64-residue protein sequence, read N- to C-terminus: Prokaryotic ubiquitin-like protein Pup (64 aa).

An ARC ATPase binding region spans residues 20–58 (QELTLAASHVVSDVSEVDDLLDEIDGLLAENAEDFVTGF). An Isoglutamyl lysine isopeptide (Glu-Lys) (interchain with K-? in acceptor proteins) cross-link involves residue Glu64.

It belongs to the prokaryotic ubiquitin-like protein family. As to quaternary structure, strongly interacts with the proteasome-associated ATPase ARC through a hydrophobic interface; the interacting region of Pup lies in its C-terminal half. There is one Pup binding site per ARC hexamer ring.

It participates in protein degradation; proteasomal Pup-dependent pathway. Functionally, protein modifier that is covalently attached to lysine residues of substrate proteins, thereby targeting them for proteasomal degradation. The tagging system is termed pupylation. The polypeptide is Prokaryotic ubiquitin-like protein Pup (Rothia mucilaginosa (strain DY-18) (Stomatococcus mucilaginosus)).